We begin with the raw amino-acid sequence, 467 residues long: tRNA-2-methylthio-N(6)-dimethylallyladenosine synthase (467 aa).

In terms of domain architecture, MTTase N-terminal spans 15–135 (KKIFVKTYGC…LPEYVARLAN (121 aa)). [4Fe-4S] cluster contacts are provided by cysteine 24, cysteine 60, cysteine 98, cysteine 177, cysteine 181, and cysteine 184. Positions 163 to 395 (LARGATAFLT…QALLGEQQLA (233 aa)) constitute a Radical SAM core domain. A TRAM domain is found at 398–461 (AGCAGRTMPV…RNSLRGRLRE (64 aa)).

This sequence belongs to the methylthiotransferase family. MiaB subfamily. In terms of assembly, monomer. Requires [4Fe-4S] cluster as cofactor.

The protein localises to the cytoplasm. It catalyses the reaction N(6)-dimethylallyladenosine(37) in tRNA + (sulfur carrier)-SH + AH2 + 2 S-adenosyl-L-methionine = 2-methylsulfanyl-N(6)-dimethylallyladenosine(37) in tRNA + (sulfur carrier)-H + 5'-deoxyadenosine + L-methionine + A + S-adenosyl-L-homocysteine + 2 H(+). In terms of biological role, catalyzes the methylthiolation of N6-(dimethylallyl)adenosine (i(6)A), leading to the formation of 2-methylthio-N6-(dimethylallyl)adenosine (ms(2)i(6)A) at position 37 in tRNAs that read codons beginning with uridine. The sequence is that of tRNA-2-methylthio-N(6)-dimethylallyladenosine synthase from Parvibaculum lavamentivorans (strain DS-1 / DSM 13023 / NCIMB 13966).